Here is a 445-residue protein sequence, read N- to C-terminus: Argininosuccinate synthase (445 aa).

Residues 17–25 (AFSGGLDTS) and A43 contribute to the ATP site. Y99 lines the L-citrulline pocket. The ATP site is built by G129 and T131. Residues T131, N135, and D136 each coordinate L-aspartate. N135 is an L-citrulline binding site. D136 is an ATP binding site. Residues R139 and S192 each contribute to the L-citrulline site. Position 194 (D194) interacts with ATP. L-citrulline-binding residues include T201, E203, and E280.

This sequence belongs to the argininosuccinate synthase family. Type 2 subfamily. In terms of assembly, homotetramer.

The protein localises to the cytoplasm. The catalysed reaction is L-citrulline + L-aspartate + ATP = 2-(N(omega)-L-arginino)succinate + AMP + diphosphate + H(+). The protein operates within amino-acid biosynthesis; L-arginine biosynthesis; L-arginine from L-ornithine and carbamoyl phosphate: step 2/3. This is Argininosuccinate synthase from Bordetella petrii (strain ATCC BAA-461 / DSM 12804 / CCUG 43448).